Reading from the N-terminus, the 261-residue chain is Rho-related GTP-binding protein RhoU (261 aa).

A disordered region spans residues 1-48 (MAPQQGRPALPARCEPPAAPPVPPRRERGGRGARGPGVSGGRGRAGGA). The span at 7–16 (RPALPARCEP) shows a compositional bias: low complexity. Gly residues predominate over residues 32–48 (GARGPGVSGGRGRAGGA). GTP-binding positions include 59–66 (GDGAVGKT), 106–110 (DTAGQ), and 164–167 (TQSD). Residues Lys-180 and Lys-251 each participate in a glycyl lysine isopeptide (Lys-Gly) (interchain with G-Cter in ubiquitin) cross-link. Cys-259 carries the S-palmitoyl cysteine lipid modification.

The protein belongs to the small GTPase superfamily. Rho family. In terms of assembly, interacts with PAK1. Interacts with PAK3. Interacts with ARHGAP30 in a GTP-independent manner. In its GTP-loaded conformation, interacts with ARHGAP31. Interacts with PTK2B/PYK2. Interacts with PAK4; interaction protects RHOU from ubiquitination and subsequent degradation. Requires Mg(2+) as cofactor. Post-translationally, tyrosine phosphorylated by SRC in response to PTK2B/PYK2 activation. In terms of processing, ubiquitinated. 'Lys-48'-linked ubiquitination at Lys-180 and Lys-251 by the ECS(RAB40A) complex leading to its degradation.

It localises to the cell membrane. It is found in the golgi apparatus membrane. The protein localises to the cell junction. Its subcellular location is the focal adhesion. The protein resides in the cell projection. It localises to the podosome. Functionally, binds to and activates protein kinase PAK1. Plays a role in the regulation of cell morphology, cytoskeletal organization and focal adhesion assembly during cell migration. Also stimulates quiescent cells to reenter the cell cycle. Has no detectable GTPase activity but its high intrinsic guanine nucleotide exchange activity suggests it is constitutively GTP-bound. In Mus musculus (Mouse), this protein is Rho-related GTP-binding protein RhoU.